Here is a 132-residue protein sequence, read N- to C-terminus: Acid shock protein (132 aa).

A signal peptide spans 1 to 21 (MKKVLALIVAATMGLSSVAFA). Residues 22 to 69 (AETTAAATAAPAATSTTAAPAVEKAAPAKATHHKKHKATKQTTEQKAQ) constitute a propeptide that is removed on maturation. The span at 30 to 50 (AAPAATSTTAAPAVEKAAPAK) shows a compositional bias: low complexity. The disordered stretch occupies residues 30–132 (AAPAATSTTA…AKKSATAPAA (103 aa)). Over residues 51–60 (ATHHKKHKAT) the composition is skewed to basic residues. Positions 61-99 (KQTTEQKAQAAKKAVKKAPAQKAQAAKKAVKKAPVQKAQ) are enriched in low complexity. A compositionally biased stretch (basic residues) spans 100-124 (AAKKHVKKAPAQKAQAAKKHHKTAK).

The protein belongs to the Asr family. Proteolytic processing gives rise to the active protein.

It is found in the periplasm. Its function is as follows. Required for growth and/or survival at acidic conditions. This chain is Acid shock protein, found in Yersinia enterocolitica serotype O:8 / biotype 1B (strain NCTC 13174 / 8081).